The chain runs to 507 residues: ATP synthase subunit alpha, chloroplastic (507 aa).

170–177 (GDRQTGKT) contributes to the ATP binding site.

Belongs to the ATPase alpha/beta chains family. As to quaternary structure, F-type ATPases have 2 components, CF(1) - the catalytic core - and CF(0) - the membrane proton channel. CF(1) has five subunits: alpha(3), beta(3), gamma(1), delta(1), epsilon(1). CF(0) has four main subunits: a, b, b' and c.

It localises to the plastid. The protein resides in the chloroplast thylakoid membrane. It carries out the reaction ATP + H2O + 4 H(+)(in) = ADP + phosphate + 5 H(+)(out). In terms of biological role, produces ATP from ADP in the presence of a proton gradient across the membrane. The alpha chain is a regulatory subunit. The protein is ATP synthase subunit alpha, chloroplastic of Silene latifolia (White campion).